The following is a 62-amino-acid chain: Large ribosomal subunit protein bL28 (62 aa).

The interval 1–22 (MAKKCAISGKGPMSGNNVSHAK) is disordered.

Belongs to the bacterial ribosomal protein bL28 family.

The polypeptide is Large ribosomal subunit protein bL28 (Sulfurimonas denitrificans (strain ATCC 33889 / DSM 1251) (Thiomicrospira denitrificans (strain ATCC 33889 / DSM 1251))).